The following is a 205-amino-acid chain: ATP-dependent Clp protease proteolytic subunit (205 aa).

Ser-98 serves as the catalytic Nucleophile. The active site involves His-123.

It belongs to the peptidase S14 family. In terms of assembly, fourteen ClpP subunits assemble into 2 heptameric rings which stack back to back to give a disk-like structure with a central cavity, resembling the structure of eukaryotic proteasomes.

The protein resides in the cytoplasm. It carries out the reaction Hydrolysis of proteins to small peptides in the presence of ATP and magnesium. alpha-casein is the usual test substrate. In the absence of ATP, only oligopeptides shorter than five residues are hydrolyzed (such as succinyl-Leu-Tyr-|-NHMec, and Leu-Tyr-Leu-|-Tyr-Trp, in which cleavage of the -Tyr-|-Leu- and -Tyr-|-Trp bonds also occurs).. Cleaves peptides in various proteins in a process that requires ATP hydrolysis. Has a chymotrypsin-like activity. Plays a major role in the degradation of misfolded proteins. In Desulforapulum autotrophicum (strain ATCC 43914 / DSM 3382 / VKM B-1955 / HRM2) (Desulfobacterium autotrophicum), this protein is ATP-dependent Clp protease proteolytic subunit.